The following is a 444-amino-acid chain: tRNA modification GTPase MnmE (444 aa).

The (6S)-5-formyl-5,6,7,8-tetrahydrofolate site is built by arginine 22, glutamate 79, and arginine 118. The TrmE-type G domain occupies 214–368 (GMQVVLAGPP…LRDHLKSVMG (155 aa)). Asparagine 224 provides a ligand contact to K(+). Residues 224-229 (NAGKSS), 243-249 (TEVPGTT), and 268-271 (DTAG) contribute to the GTP site. A Mg(2+)-binding site is contributed by serine 228. Residues threonine 243, valine 245, and threonine 248 each contribute to the K(+) site. Threonine 249 lines the Mg(2+) pocket. Position 444 (lysine 444) interacts with (6S)-5-formyl-5,6,7,8-tetrahydrofolate.

The protein belongs to the TRAFAC class TrmE-Era-EngA-EngB-Septin-like GTPase superfamily. TrmE GTPase family. As to quaternary structure, homodimer. Heterotetramer of two MnmE and two MnmG subunits. Requires K(+) as cofactor.

Its subcellular location is the cytoplasm. Functionally, exhibits a very high intrinsic GTPase hydrolysis rate. Involved in the addition of a carboxymethylaminomethyl (cmnm) group at the wobble position (U34) of certain tRNAs, forming tRNA-cmnm(5)s(2)U34. The sequence is that of tRNA modification GTPase MnmE from Alkalilimnicola ehrlichii (strain ATCC BAA-1101 / DSM 17681 / MLHE-1).